The primary structure comprises 113 residues: Small ribosomal subunit protein uS17 (113 aa).

The protein belongs to the universal ribosomal protein uS17 family. In terms of assembly, part of the 30S ribosomal subunit.

One of the primary rRNA binding proteins, it binds specifically to the 5'-end of 16S ribosomal RNA. The protein is Small ribosomal subunit protein uS17 of Pyrococcus abyssi (strain GE5 / Orsay).